A 575-amino-acid polypeptide reads, in one-letter code: Transcription factor COE2 (575 aa).

The segment at 62–65 (RKSN) is interaction with DNA. The C5-type zinc finger occupies 150–169 (CRVLLTHEVMCSRCCEKKSC). 2 interaction with DNA regions span residues 196–203 (NCLKTAGN) and 235–238 (NNSK). An IPT/TIG domain is found at 253 to 336 (PCIKAISPSE…KGAPGRFIYT (84 aa)). Polar residues predominate over residues 441 to 453 (STQGNNQGYIRNT). The segment at 441 to 479 (STQGNNQGYIRNTSSISPRGYSSSSTPQQSNYSTSSNSM) is disordered. Over residues 454-479 (SSISPRGYSSSSTPQQSNYSTSSNSM) the composition is skewed to low complexity.

It belongs to the COE family. In terms of assembly, forms either a homodimer or a heterodimer with a related family member. Interacts with SIX1.

The protein localises to the nucleus. Functionally, transcription factor that, in osteoblasts, activates the decoy receptor for RANKL, TNFRSF11B, which in turn regulates osteoclast differentiation. Acts in synergy with the Wnt-responsive LEF1/CTNNB1 pathway. Recognizes variations of the palindromic sequence 5'-ATTCCCNNGGGAATT-3'. This Bos taurus (Bovine) protein is Transcription factor COE2 (EBF2).